Here is a 437-residue protein sequence, read N- to C-terminus: Aminopeptidase G (437 aa).

Catalysis depends on residues C70, H361, and N382.

The protein belongs to the peptidase C1 family.

The protein localises to the cytoplasm. This Lactobacillus delbrueckii subsp. lactis protein is Aminopeptidase G (pepG).